Here is a 213-residue protein sequence, read N- to C-terminus: Neuroligin-4, X-linked (213 aa).

The interval 1–56 (FQYVSTTTKVPPPDMTSFPYGTRRSPAKIWPTTKRPAITPANNPKHSKDPHKTGPE) is disordered. Topologically, residues 1–73 (FQYVSTTTKV…TKRDYSTELS (73 aa)) are extracellular. Residues 46-55 (HSKDPHKTGP) are compositionally biased toward basic and acidic residues. A helical membrane pass occupies residues 74 to 94 (VTIAVGASLLFLNILAFAALY). Residues 95–213 (YKKDKRRHET…LPHGHSTTRV (119 aa)) lie on the Cytoplasmic side of the membrane. Phosphoserine is present on S109.

This sequence belongs to the type-B carboxylesterase/lipase family. In terms of assembly, homodimer. Interacts with NRXN1 in a calcium-dependent manner. Interaction with neurexins is mediated by heparan sulfate glycan modification on neurexin. Interacts through its C-terminus with DLG4/PSD-95 third PDZ domain.

Its subcellular location is the cell membrane. It localises to the postsynaptic density membrane. Its function is as follows. Cell surface protein involved in cell-cell-interactions via its interactions with neurexin family members. The protein is Neuroligin-4, X-linked (NLGN4X) of Macaca mulatta (Rhesus macaque).